Reading from the N-terminus, the 368-residue chain is RAB6-interacting golgin (368 aa).

Disordered stretches follow at residues 1–43 (MAQD…REKA), 55–133 (DGSA…DCKV), and 302–368 (KQMA…AVAT). The segment covering 11–27 (EELRRLKQNKDPFEPQR) has biased composition (basic and acidic residues). The span at 80–89 (SPSPVAPSPL) shows a compositional bias: pro residues. Positions 114-133 (NSHHGHKSAEVRAPKPDCKV) are enriched in basic and acidic residues. Positions 145–310 (RWEVLQQEQR…AKQMASVERL (166 aa)) form a coiled coil. Positions 188-368 (IQKELQALDD…AKNFSAAVAT (181 aa)) are necessary for interaction with RCHY1.

It belongs to the GORAB family. As to quaternary structure, interacts with RCHY1. Interacts with SCYL1 and RAB6A/RAB6. In terms of tissue distribution, expressed in small intestine, kidney, skeletal muscle, lung, spleen, brain and heart. High expression is observed in osteoblasts and skin; also expressed in osteoclasts albeit at lower levels.

The protein localises to the cytoplasm. The protein resides in the golgi apparatus. This chain is RAB6-interacting golgin (Gorab), found in Mus musculus (Mouse).